The chain runs to 278 residues: HTH-type transcriptional activator RhaS (278 aa).

The HTH araC/xylS-type domain maps to 174-272; that stretch reads NQLMAWLEDH…SWSPREIRQG (99 aa). 2 consecutive DNA-binding regions (H-T-H motif) follow at residues 191–212 and 239–262; these read ETVA…KQHT and VTDI…RREF.

As to quaternary structure, binds DNA as a dimer.

The protein resides in the cytoplasm. Functionally, activates expression of the rhaBAD and rhaT operons. This is HTH-type transcriptional activator RhaS from Enterobacter sp. (strain 638).